The primary structure comprises 411 residues: Putative odorant receptor 59c (411 aa).

Residues 1-46 (MTKFFFKRLQTAPLDQEVSSLDASDYYYRIAFFLGWTPPKGALLRW) are Cytoplasmic-facing. Residues 47–67 (IYSLWTLTTMWLGIVYLPLGL) form a helical membrane-spanning segment. The Extracellular segment spans residues 68–86 (SLTYVKHFDRFTPTEFLTS). The helical transmembrane segment at 87–107 (LQVDINCIGNVIKSCVTYSQM) threads the bilayer. The Cytoplasmic segment spans residues 108-139 (WRFRRMNELISSLDKRCVTTTQRRIFHKMVAR). The chain crosses the membrane as a helical span at residues 140–160 (VNLIVILFLSTYLGFCFLTLF). Topologically, residues 161–185 (TSVFAGKAPWQLYNPLVDWRKGHWQ) are extracellular. A helical membrane pass occupies residues 186-206 (LWIASILEYCVVSIGTMQELM). The Cytoplasmic portion of the chain corresponds to 207-271 (SDTYAIVFIS…QIIRPILSIT (65 aa)). Residues 272 to 292 (IFAQFMLVGIDLGLAAISILF) traverse the membrane as a helical segment. Residues 293 to 296 (FPNT) lie on the Extracellular side of the membrane. A helical membrane pass occupies residues 297–317 (IWTIMANVSFIVAICTESFPC). Residues 318–369 (CMLCEHLIEDSVHVSNALFHSNWITADRSYKSAVLYFLHRAQQPIQFTAGSI) lie on the Cytoplasmic side of the membrane. Residues 370–390 (FPISVQSNIAVAKFAFTIITI) form a helical membrane-spanning segment. Over 391–411 (VNQMNLGEKFFSDRSNGDINP) the chain is Extracellular.

It belongs to the insect chemoreceptor superfamily. Heteromeric odorant receptor channel (TC 1.A.69) family. Or2a subfamily. Interacts with Orco. Complexes exist early in the endomembrane system in olfactory sensory neurons (OSNs), coupling these complexes to the conserved ciliary trafficking pathway. In terms of tissue distribution, expressed in olfactory sensory neurons in the maxillary palp.

The protein resides in the cell membrane. Its function is as follows. Odorant receptor which mediates acceptance or avoidance behavior, depending on its substrates. The odorant receptor repertoire encodes a large collection of odor stimuli that vary widely in identity, intensity, and duration. May form a complex with Orco to form odorant-sensing units, providing sensitive and prolonged odorant signaling and calcium permeability. This chain is Putative odorant receptor 59c (Or59c), found in Drosophila melanogaster (Fruit fly).